The chain runs to 26 residues: VSCADILTMATRQFDNVYYKNLQQGK.

Asp-15 provides a ligand contact to Ca(2+).

Belongs to the peroxidase family. Classical plant (class III) peroxidase subfamily. Heme b serves as cofactor. Requires Ca(2+) as cofactor.

The protein localises to the secreted. It carries out the reaction 2 a phenolic donor + H2O2 = 2 a phenolic radical donor + 2 H2O. Its function is as follows. Removal of H(2)O(2), oxidation of toxic reductants, biosynthesis and degradation of lignin, suberization, auxin catabolism, response to environmental stresses such as wounding, pathogen attack and oxidative stress. These functions might be dependent on each isozyme/isoform in each plant tissue. In Vitis vinifera (Grape), this protein is Peroxidase 1.